Consider the following 852-residue polypeptide: Probable LRR receptor-like serine/threonine-protein kinase At1g05700 (852 aa).

The signal sequence occupies residues 1–25 (MEEFRFLYLIYSAAFALCLVVSVLA). Residues 26 to 510 (QDQSGFISID…SCRKSNSKKL (485 aa)) are Extracellular-facing. 9 N-linked (GlcNAc...) asparagine glycosylation sites follow: Asn-138, Asn-182, Asn-231, Asn-240, Asn-258, Asn-293, Asn-400, Asn-415, and Asn-431. LRR repeat units follow at residues 410–432 (RITS…FSNL), 434–457 (MIQE…SKLK), and 458–479 (FLRV…ELLE). Residue Asn-466 is glycosylated (N-linked (GlcNAc...) asparagine). Residues 511–531 (VIPLVASFAALFILLLLSGVF) traverse the membrane as a helical segment. At 532–852 (WRIRNRRNKS…LQREESNKNY (321 aa)) the chain is on the cytoplasmic side. Phosphothreonine is present on Thr-561. One can recognise a Protein kinase domain in the interval 570–843 (NNFGQVLGKG…HIVRGLNECL (274 aa)). ATP is bound by residues 576–584 (LGKGGFGTV) and Lys-597. Residue Tyr-642 is modified to Phosphotyrosine. Asp-693 (proton acceptor) is an active-site residue. A phosphoserine mark is found at Ser-697 and Ser-727. Phosphothreonine is present on residues Thr-728 and Thr-733.

It belongs to the protein kinase superfamily. Ser/Thr protein kinase family.

The protein resides in the membrane. It catalyses the reaction L-seryl-[protein] + ATP = O-phospho-L-seryl-[protein] + ADP + H(+). The catalysed reaction is L-threonyl-[protein] + ATP = O-phospho-L-threonyl-[protein] + ADP + H(+). The polypeptide is Probable LRR receptor-like serine/threonine-protein kinase At1g05700 (Arabidopsis thaliana (Mouse-ear cress)).